A 129-amino-acid chain; its full sequence is Glycine cleavage system H protein (129 aa).

A Lipoyl-binding domain is found at 24–106 (TFTVGITEHA…FGDGWLFRIK (83 aa)). Lys65 carries the N6-lipoyllysine modification.

Belongs to the GcvH family. The glycine cleavage system is composed of four proteins: P, T, L and H. (R)-lipoate is required as a cofactor.

In terms of biological role, the glycine cleavage system catalyzes the degradation of glycine. The H protein shuttles the methylamine group of glycine from the P protein to the T protein. The polypeptide is Glycine cleavage system H protein (Pseudoalteromonas translucida (strain TAC 125)).